A 293-amino-acid polypeptide reads, in one-letter code: Glutamyl-Q tRNA(Asp) synthetase (293 aa).

Residues 9–13 (RFAPS) and glutamate 45 each bind L-glutamate. The 'HIGH' region signature appears at 12 to 22 (PSPSGELHFGS). Zn(2+) contacts are provided by cysteine 101, cysteine 103, tyrosine 115, and cysteine 119. L-glutamate is bound by residues tyrosine 172 and arginine 190. The short motif at 228–232 (KLSKQ) is the 'KMSKS' region element. Residue lysine 231 participates in ATP binding.

Belongs to the class-I aminoacyl-tRNA synthetase family. GluQ subfamily. It depends on Zn(2+) as a cofactor.

Its function is as follows. Catalyzes the tRNA-independent activation of glutamate in presence of ATP and the subsequent transfer of glutamate onto a tRNA(Asp). Glutamate is transferred on the 2-amino-5-(4,5-dihydroxy-2-cyclopenten-1-yl) moiety of the queuosine in the wobble position of the QUC anticodon. This chain is Glutamyl-Q tRNA(Asp) synthetase, found in Klebsiella pneumoniae (strain 342).